Here is a 212-residue protein sequence, read N- to C-terminus: Protein-L-isoaspartate O-methyltransferase (212 aa).

The active site involves Ser-60.

Belongs to the methyltransferase superfamily. L-isoaspartyl/D-aspartyl protein methyltransferase family.

The protein resides in the cytoplasm. The catalysed reaction is [protein]-L-isoaspartate + S-adenosyl-L-methionine = [protein]-L-isoaspartate alpha-methyl ester + S-adenosyl-L-homocysteine. In terms of biological role, catalyzes the methyl esterification of L-isoaspartyl residues in peptides and proteins that result from spontaneous decomposition of normal L-aspartyl and L-asparaginyl residues. It plays a role in the repair and/or degradation of damaged proteins. The polypeptide is Protein-L-isoaspartate O-methyltransferase (Pseudomonas putida (strain ATCC 700007 / DSM 6899 / JCM 31910 / BCRC 17059 / LMG 24140 / F1)).